A 171-amino-acid chain; its full sequence is Adenine phosphoribosyltransferase (171 aa).

Belongs to the purine/pyrimidine phosphoribosyltransferase family. Homodimer.

It localises to the cytoplasm. It catalyses the reaction AMP + diphosphate = 5-phospho-alpha-D-ribose 1-diphosphate + adenine. It participates in purine metabolism; AMP biosynthesis via salvage pathway; AMP from adenine: step 1/1. In terms of biological role, catalyzes a salvage reaction resulting in the formation of AMP, that is energically less costly than de novo synthesis. This is Adenine phosphoribosyltransferase from Shouchella clausii (strain KSM-K16) (Alkalihalobacillus clausii).